The chain runs to 219 residues: UPF0502 protein Gura_3445 (219 aa).

The interval 162-181 (AGEPDLPDDTPAPPPEPARQ) is disordered.

It belongs to the UPF0502 family.

This Geotalea uraniireducens (strain Rf4) (Geobacter uraniireducens) protein is UPF0502 protein Gura_3445.